We begin with the raw amino-acid sequence, 462 residues long: UDP-N-acetylmuramoylalanine--D-glutamate ligase (462 aa).

125-131 is an ATP binding site; that stretch reads GSDGKTT.

The protein belongs to the MurCDEF family.

It is found in the cytoplasm. The enzyme catalyses UDP-N-acetyl-alpha-D-muramoyl-L-alanine + D-glutamate + ATP = UDP-N-acetyl-alpha-D-muramoyl-L-alanyl-D-glutamate + ADP + phosphate + H(+). It participates in cell wall biogenesis; peptidoglycan biosynthesis. Functionally, cell wall formation. Catalyzes the addition of glutamate to the nucleotide precursor UDP-N-acetylmuramoyl-L-alanine (UMA). In Clostridium acetobutylicum (strain ATCC 824 / DSM 792 / JCM 1419 / IAM 19013 / LMG 5710 / NBRC 13948 / NRRL B-527 / VKM B-1787 / 2291 / W), this protein is UDP-N-acetylmuramoylalanine--D-glutamate ligase.